The primary structure comprises 342 residues: Keratin-associated protein 29-1 (342 aa).

Repeat copies occupy residues 5-9, 91-95, 239-243, 309-313, and 324-328. The interval 5–328 is 5 X 5 AA repeats of C-C-X(3); sequence CCPENPTAVP…SSGPGCCPPT (324 aa).

It belongs to the KRTAP type 10 family.

This is Keratin-associated protein 29-1 (Krtap29-1) from Mus musculus (Mouse).